The chain runs to 394 residues: Elongation factor Tu 2 (394 aa).

The region spanning 10-204 is the tr-type G domain; it reads KPHVNVGTIG…YLDTYIPEPE (195 aa). The segment at 19–26 is G1; it reads GHVDHGKT. Position 19–26 (19–26) interacts with GTP; it reads GHVDHGKT. T26 serves as a coordination point for Mg(2+). Positions 60 to 64 are G2; the sequence is GITIN. The G3 stretch occupies residues 81-84; it reads DCPG. GTP is bound by residues 81 to 85 and 136 to 139; these read DCPGH and NKCD. The interval 136–139 is G4; the sequence is NKCD. A G5 region spans residues 174 to 176; it reads SAL.

Belongs to the TRAFAC class translation factor GTPase superfamily. Classic translation factor GTPase family. EF-Tu/EF-1A subfamily. In terms of assembly, monomer.

The protein resides in the cytoplasm. It catalyses the reaction GTP + H2O = GDP + phosphate + H(+). Functionally, GTP hydrolase that promotes the GTP-dependent binding of aminoacyl-tRNA to the A-site of ribosomes during protein biosynthesis. The chain is Elongation factor Tu 2 from Yersinia enterocolitica serotype O:8 / biotype 1B (strain NCTC 13174 / 8081).